A 71-amino-acid polypeptide reads, in one-letter code: Small ribosomal subunit protein bS21 (71 aa).

The protein belongs to the bacterial ribosomal protein bS21 family.

This chain is Small ribosomal subunit protein bS21, found in Dichelobacter nodosus (strain VCS1703A).